The primary structure comprises 88 residues: Small ribosomal subunit protein uS17 (88 aa).

It belongs to the universal ribosomal protein uS17 family. In terms of assembly, part of the 30S ribosomal subunit.

In terms of biological role, one of the primary rRNA binding proteins, it binds specifically to the 5'-end of 16S ribosomal RNA. The chain is Small ribosomal subunit protein uS17 from Lactobacillus delbrueckii subsp. bulgaricus (strain ATCC 11842 / DSM 20081 / BCRC 10696 / JCM 1002 / NBRC 13953 / NCIMB 11778 / NCTC 12712 / WDCM 00102 / Lb 14).